The following is a 260-amino-acid chain: Acyl-coenzyme A diphosphatase FITM2 (260 aa).

Topologically, residues 1–23 (MERLENCAQMFQRRFLNESFRRH) are cytoplasmic. A helical transmembrane segment spans residues 24 to 44 (CPVLLACIVLGGSLLKELCPL). The Lumenal portion of the chain corresponds to 45–57 (PDSYWNNKRNVLN). A helical transmembrane segment spans residues 58–78 (VYFVKFSWGWTLWLLLPFIAL). Residues 79 to 93 (TNYKLTRSTTKVLRR) are Cytoplasmic-facing. A helical transmembrane segment spans residues 94 to 114 (LSSLLVSTLIWYLCTNLFLYI). At 115–145 (ENITGSCYESEAMSDPKEHQDRRECRLHSGY) the chain is on the lumenal side. A helical membrane pass occupies residues 146–166 (WHGFDISGHCFLLSYCILLIL). Residue His154 is part of the active site. Over 167-189 (EETSIISNIRFERHWHRMAINAQ) the chain is Cytoplasmic. A run of 2 helical transmembrane segments spans residues 190-210 (FAAL…TAVY) and 211-231 (FHNI…WYIT). His212 is a catalytic residue. Topologically, residues 232–260 (YRWWYLQPISPGLPPASASRSGKEPIYRN) are cytoplasmic.

The protein belongs to the FIT family. FIT2 subfamily.

The protein localises to the endoplasmic reticulum membrane. It carries out the reaction an acyl-CoA + H2O = an acyl-4'-phosphopantetheine + adenosine 3',5'-bisphosphate + 2 H(+). In terms of biological role, fatty acyl-coenzyme A (CoA) diphosphatase that hydrolyzes fatty acyl-CoA to yield acyl-4'-phosphopantetheine and adenosine 3',5'-bisphosphate. Preferentially hydrolyzes unsaturated long-chain acyl-CoA substrates in the endoplasmic reticulum (ER) lumen. This catalytic activity is required for maintaining ER structure and for lipid droplets (LDs) biogenesis, which are lipid storage organelles involved in maintaining lipid and energy homeostasis. May directly bind to diacylglycerol (DAGs) and triacylglycerol, which is also important for LD biogenesis. May support directional budding of nacent LDs from the ER into the cytosol by reducing DAG levels at sites of LD formation. May play a role in the regulation of cell morphology, ER morphology and cytoskeletal organization. The polypeptide is Acyl-coenzyme A diphosphatase FITM2 (Xenopus tropicalis (Western clawed frog)).